The primary structure comprises 414 residues: Glutamyl-tRNA reductase (414 aa).

Substrate-binding positions include 49–52 (TCNR), Ser108, 113–115 (EPQ), and Gln119. Cys50 serves as the catalytic Nucleophile. 188-193 (GAGQTG) is an NADP(+) binding site.

It belongs to the glutamyl-tRNA reductase family. As to quaternary structure, homodimer.

It carries out the reaction (S)-4-amino-5-oxopentanoate + tRNA(Glu) + NADP(+) = L-glutamyl-tRNA(Glu) + NADPH + H(+). Its pathway is porphyrin-containing compound metabolism; protoporphyrin-IX biosynthesis; 5-aminolevulinate from L-glutamyl-tRNA(Glu): step 1/2. In terms of biological role, catalyzes the NADPH-dependent reduction of glutamyl-tRNA(Glu) to glutamate 1-semialdehyde (GSA). This Francisella tularensis subsp. holarctica (strain LVS) protein is Glutamyl-tRNA reductase.